Reading from the N-terminus, the 201-residue chain is Ras-related protein Rab-1B (201 aa).

Methionine 1 carries the N-acetylmethionine modification. Positions 17, 18, 19, 20, 21, 22, 23, 33, 34, 35, 36, 39, and 40 each coordinate GTP. A Mg(2+)-binding site is contributed by serine 22. Residues 30-45 (DDTYTESYISTIGVDF) carry the Switch 1 motif. Positions 40 and 63 each coordinate Mg(2+). Residues 64 to 83 (TAGQERFRTVTSSYYRGAHG) form a switch 2 region; required for interaction with REP1/CHM region. The Switch 2 motif lies at 65-80 (AGQERFRTVTSSYYRG). The GTP site is built by glycine 66, asparagine 121, lysine 122, aspartate 124, serine 151, alanine 152, and lysine 153. Residues 173–201 (MGPGAASGGERPNLKIDSTPVKSASGGCC) are disordered. 2 S-geranylgeranyl cysteine lipidation sites follow: cysteine 200 and cysteine 201. Cysteine methyl ester is present on cysteine 201.

It belongs to the small GTPase superfamily. Rab family. In terms of assembly, interacts with MICAL1 and MICAL2. Interacts (in GTP-bound form) with MICALCL, MICAL1 and MILCAL3. Interacts with GDI1; the interaction requires the GDP-bound state. Interacts with CHM/REP1; the interaction requires the GDP-bound form and is necessary for prenylation by GGTase II. Interacts with RabGAP TBC1D20. Interacts (in GDP-bound form) with lipid phosphatase MTMR6 (via GRAM domain); the interaction regulates MTMR6 recruitment to the endoplasmic reticulum-Golgi intermediate compartment. Interacts (in GDP-bound form) with lipid phosphatase MTMR7. It depends on Mg(2+) as a cofactor. Post-translationally, prenylated; by GGTase II, only after interaction of the substrate with Rab escort protein 1 (REP1).

It is found in the cytoplasm. The protein localises to the membrane. Its subcellular location is the preautophagosomal structure membrane. It localises to the perinuclear region. The enzyme catalyses GTP + H2O = GDP + phosphate + H(+). Regulated by guanine nucleotide exchange factors (GEFs) which promote the exchange of bound GDP for free GTP. Regulated by GTPase activating proteins (GAPs) including TBC1D20 which increases the GTP hydrolysis activity. Inhibited by GDP dissociation inhibitors (GDIs). Its function is as follows. The small GTPases Rab are key regulators of intracellular membrane trafficking, from the formation of transport vesicles to their fusion with membranes. Rabs cycle between an inactive GDP-bound form and an active GTP-bound form that is able to recruit to membranes different set of downstream effectors directly responsible for vesicle formation, movement, tethering and fusion. Plays a role in the initial events of the autophagic vacuole development which take place at specialized regions of the endoplasmic reticulum. Regulates vesicular transport between the endoplasmic reticulum and successive Golgi compartments. Required to modulate the compacted morphology of the Golgi. Promotes the recruitment of lipid phosphatase MTMR6 to the endoplasmic reticulum-Golgi intermediate compartment. In Rattus norvegicus (Rat), this protein is Ras-related protein Rab-1B (Rab1b).